Reading from the N-terminus, the 492-residue chain is Catalase isozyme 2 (492 aa).

Catalysis depends on residues histidine 65 and asparagine 138. Heme is bound at residue tyrosine 348.

The protein belongs to the catalase family. Homotetramer. The cofactor is heme.

The protein resides in the peroxisome. It carries out the reaction 2 H2O2 = O2 + 2 H2O. In terms of biological role, occurs in almost all aerobically respiring organisms and serves to protect cells from the toxic effects of hydrogen peroxide. The sequence is that of Catalase isozyme 2 (CAT2) from Solanum lycopersicum (Tomato).